Reading from the N-terminus, the 522-residue chain is Zinc finger protein C25B8.19c (522 aa).

Disordered stretches follow at residues 1 to 25 (MSSDNTPSINRRNNENPPQSSLPTT), 61 to 96 (DPQAATVSESANVSRPTPAPVPPAGNTNTPTTSNSN), 235 to 265 (QRQSSEAAEQPSSKNNTSGANPPSSNNQEVT), 311 to 386 (QPSS…HTLS), and 413 to 462 (NSAQ…STSS). Residues 84 to 96 (AGNTNTPTTSNSN) show a composition bias toward low complexity. Composition is skewed to polar residues over residues 311–321 (QPSSRDLQNHP) and 335–344 (ASNTLNHANG). Low complexity predominate over residues 345-362 (NQAENASESSTSQSNDSQ). Residues 413–427 (NSAQAHPMGQQSDSN) are compositionally biased toward polar residues. Positions 428–438 (YSDHHNNDKRA) are enriched in basic and acidic residues. Low complexity predominate over residues 453–462 (SHTGSSSTSS). 2 C2H2-type zinc fingers span residues 468 to 495 (YRCTECLQGFSRPSSLKIHTYSHTGERP) and 496 to 522 (FVCDYAGCGKAFNVRSNMRRHQRIHGL).

Its subcellular location is the nucleus. The chain is Zinc finger protein C25B8.19c from Schizosaccharomyces pombe (strain 972 / ATCC 24843) (Fission yeast).